Here is a 324-residue protein sequence, read N- to C-terminus: 33 kDa ribonucleoprotein, chloroplastic (324 aa).

Residues 1 to 71 (MSGCCFSFAA…YRSSIFLSTC (71 aa)) constitute a chloroplast transit peptide. 2 consecutive RRM domains span residues 114–192 (GRLY…FPEV) and 217–296 (HKLY…AGQK). The interval 294–324 (GQKAPVSSPPVVETSPENDSDNSELLSSLSS) is disordered. Over residues 298 to 308 (PVSSPPVVETS) the composition is skewed to low complexity.

Its subcellular location is the plastid. It is found in the chloroplast. In terms of biological role, could be involved in splicing and/or processing of chloroplast RNA's. This Nicotiana sylvestris (Wood tobacco) protein is 33 kDa ribonucleoprotein, chloroplastic.